Reading from the N-terminus, the 426-residue chain is D-tagatose-1,6-bisphosphate aldolase subunit KbaZ (426 aa).

It belongs to the GatZ/KbaZ family. KbaZ subfamily. In terms of assembly, forms a complex with KbaY.

It functions in the pathway carbohydrate metabolism; D-tagatose 6-phosphate degradation; D-glyceraldehyde 3-phosphate and glycerone phosphate from D-tagatose 6-phosphate: step 2/2. Component of the tagatose-1,6-bisphosphate aldolase KbaYZ that is required for full activity and stability of the Y subunit. Could have a chaperone-like function for the proper and stable folding of KbaY. When expressed alone, KbaZ does not show any aldolase activity. This is D-tagatose-1,6-bisphosphate aldolase subunit KbaZ from Escherichia coli (strain SMS-3-5 / SECEC).